A 179-amino-acid polypeptide reads, in one-letter code: ATP synthase subunit delta (179 aa).

The protein belongs to the ATPase delta chain family. In terms of assembly, F-type ATPases have 2 components, F(1) - the catalytic core - and F(0) - the membrane proton channel. F(1) has five subunits: alpha(3), beta(3), gamma(1), delta(1), epsilon(1). F(0) has three main subunits: a(1), b(2) and c(10-14). The alpha and beta chains form an alternating ring which encloses part of the gamma chain. F(1) is attached to F(0) by a central stalk formed by the gamma and epsilon chains, while a peripheral stalk is formed by the delta and b chains.

It localises to the cell membrane. In terms of biological role, f(1)F(0) ATP synthase produces ATP from ADP in the presence of a proton or sodium gradient. F-type ATPases consist of two structural domains, F(1) containing the extramembraneous catalytic core and F(0) containing the membrane proton channel, linked together by a central stalk and a peripheral stalk. During catalysis, ATP synthesis in the catalytic domain of F(1) is coupled via a rotary mechanism of the central stalk subunits to proton translocation. Functionally, this protein is part of the stalk that links CF(0) to CF(1). It either transmits conformational changes from CF(0) to CF(1) or is implicated in proton conduction. This Staphylococcus haemolyticus (strain JCSC1435) protein is ATP synthase subunit delta.